The sequence spans 128 residues: MTEADVNPKAYPLADAHLTKKLLDLVQQSCNYKQLRKGANEATKTLNRGISEFIVMAADAEPLEIILHLPLLCEDKNVPYVFVRSKQALGRACGVSRPVIACSVTIKEGSQLKQQIQSIQQSIERLLV.

Met-1 is subject to N-acetylmethionine. An N-acetylthreonine; in NHP2-like protein 1, N-terminally processed modification is found at Thr-2. Lys-21 carries the post-translational modification N6-acetyllysine. Residues 36–48 are interaction with U4 snRNA and U4atac snRNA; sequence RKGANEATKTLNR. The segment at 96-128 is important for U4 snRNA-binding; the sequence is SRPVIACSVTIKEGSQLKQQIQSIQQSIERLLV. Ser-122 carries the phosphoserine modification.

This sequence belongs to the eukaryotic ribosomal protein eL8 family. In terms of assembly, identified in the spliceosome B complex. Component of the U4/U6-U5 tri-snRNP complex composed of the U4, U6 and U5 snRNAs and at least PRPF3, PRPF4, PRPF6, PRPF8, PRPF31, SNRNP200, TXNL4A, WDR57, SNRNP40, DDX23, CD2BP2, PPIH, NHP2L1, EFTUD2, SART1 and USP39. Interacts with RAD17 and PRPF31. The complex formed by SNU13 and PRPF31 binds U4 snRNA. The complex formed by SNU13 and PRPF31 also binds U4atac snRNA, a characteristic component of specific, less abundant spliceosomal complexes. Part of the small subunit (SSU) processome, composed of more than 70 proteins and the RNA chaperone small nucleolar RNA (snoRNA) U3. Core component of box C/D small nucleolar ribonucleoprotein (snoRNP) particles; the core proteins SNU13, NOP56, NOP58 and FBL or FBLL1 assemble stepwise onto the snoRNA.

It localises to the nucleus. It is found in the nucleolus. In terms of biological role, part of the small subunit (SSU) processome, first precursor of the small eukaryotic ribosomal subunit. During the assembly of the SSU processome in the nucleolus, many ribosome biogenesis factors, an RNA chaperone and ribosomal proteins associate with the nascent pre-rRNA and work in concert to generate RNA folding, modifications, rearrangements and cleavage as well as targeted degradation of pre-ribosomal RNA by the RNA exosome. Involved in pre-mRNA splicing as component of the spliceosome. Binds to the 5'-stem-loop of U4 snRNA and thereby contributes to spliceosome assembly. The protein undergoes a conformational change upon RNA-binding. Core component of box C/D small nucleolar ribonucleoprotein (snoRNP) complexes that function in methylation of multiple sites on ribosomal RNAs (rRNAs) and messenger RNAs (mRNAs). This chain is NHP2-like protein 1, found in Bos taurus (Bovine).